We begin with the raw amino-acid sequence, 213 residues long: 3-isopropylmalate dehydratase small subunit (213 aa).

It belongs to the LeuD family. LeuD type 1 subfamily. In terms of assembly, heterodimer of LeuC and LeuD.

The catalysed reaction is (2R,3S)-3-isopropylmalate = (2S)-2-isopropylmalate. Its pathway is amino-acid biosynthesis; L-leucine biosynthesis; L-leucine from 3-methyl-2-oxobutanoate: step 2/4. Its function is as follows. Catalyzes the isomerization between 2-isopropylmalate and 3-isopropylmalate, via the formation of 2-isopropylmaleate. This is 3-isopropylmalate dehydratase small subunit from Neisseria meningitidis serogroup C (strain 053442).